We begin with the raw amino-acid sequence, 555 residues long: uncharacterized protein (555 aa).

Positions 1-28 are cleaved as a signal peptide; the sequence is MRSGLFGVLRWTAVGLVATLVASLALTA. C29 carries the N-palmitoyl cysteine lipid modification. C29 carries the S-diacylglycerol cysteine lipid modification.

It to M.tuberculosis Rv2585c and M.bovis Mb2616c.

The protein resides in the cell membrane. This is an uncharacterized protein from Mycobacterium leprae (strain TN).